We begin with the raw amino-acid sequence, 224 residues long: UPF0758 protein PSPTO_0086 (224 aa).

Positions 102–224 (ALENPAQVRN…PLSMVEKGLM (123 aa)) constitute an MPN domain. Residues H173, H175, and D186 each coordinate Zn(2+). A JAMM motif motif is present at residues 173-186 (HNHPSGITTPSRSD).

The protein belongs to the UPF0758 family.

The sequence is that of UPF0758 protein PSPTO_0086 from Pseudomonas syringae pv. tomato (strain ATCC BAA-871 / DC3000).